Reading from the N-terminus, the 553-residue chain is Aminotransferase FUM8 (553 aa).

A signal peptide spans 1–25 (MSPAPAILALRRVYNFCLLVDEAHG). A glycan (N-linked (GlcNAc...) asparagine) is linked at Asn480.

Belongs to the class-II pyridoxal-phosphate-dependent aminotransferase family. BioF subfamily. Pyridoxal 5'-phosphate is required as a cofactor.

It localises to the endoplasmic reticulum. It functions in the pathway mycotoxin biosynthesis. Its function is as follows. Aminotransferase; part of the gene cluster that mediates the biosynthesis of fumonisins B1 (FB1), B2 (FB2), B3 (FB3), and B4 (FB4), which are carcinogenic mycotoxins. Within the pathway, FUM8 catalyzes the release of the C-18 polyketide chain from the highly reducing polyketide synthase FUM1 by a nucleophilic attack of a carbanion, which is derived from R-carbon of alanine by decarboxylation, on the carbonyl carbon of polyketide acyl chain. The biosynthesis starts with the FUM1-catalyzed carbon chain assembly from one molecule of acetyl-CoA, eight molecules of malonyl-CoA, and two molecules of methionine (in S-adenosyl form). The C18 polyketide chain is released from the enzyme by a nucleophilic attack of a carbanion, which is derived from R-carbon of alanine by decarboxylation, on the carbonyl carbon of polyketide acyl chain. This step is catalyzed by the pyridoxal 5'-phosphate-dependent aminoacyl transferase FUM8. The resultant 3-keto intermediate is then stereospecifically reduced to a 3-hydroxyl product by reductase FUM13. Subsequent oxidations at C-10 by the cytochrome P450 monooxygenase FUM2, C-14 and C-15 by FUM6, FUM12 or FUM15, tricarballylic esterification of the hydroxyl groups on C-14 and C-15 by acyltransferase FUM14, and C-5 hydroxylation by 2-keto-glutarate-dependent dioxygenase FUM3 furnish the biosynthesis of fumonisins. The tricarballylic moieties are most likely derived from the citric acid cycle, and their addition to the carbon backbone may involve FUM7, FUM10, FUM11 and FUM14. This is Aminotransferase FUM8 from Gibberella moniliformis (strain M3125 / FGSC 7600) (Maize ear and stalk rot fungus).